The sequence spans 91 residues: Elongation factor 1-beta (91 aa).

Belongs to the EF-1-beta/EF-1-delta family.

Its function is as follows. Promotes the exchange of GDP for GTP in EF-1-alpha/GDP, thus allowing the regeneration of EF-1-alpha/GTP that could then be used to form the ternary complex EF-1-alpha/GTP/AAtRNA. In Thermococcus kodakarensis (strain ATCC BAA-918 / JCM 12380 / KOD1) (Pyrococcus kodakaraensis (strain KOD1)), this protein is Elongation factor 1-beta.